The primary structure comprises 375 residues: Growth/differentiation factor 8 (375 aa).

The signal sequence occupies residues 1–18 (MQKLQISVYIYLFMLIVA). The propeptide occupies 19 to 266 (GPVDLNENSE…VTDTPKRSRR (248 aa)). Asn-71 carries an N-linked (GlcNAc...) asparagine glycan. 4 cysteine pairs are disulfide-bonded: Cys-272–Cys-282, Cys-281–Cys-340, Cys-309–Cys-372, and Cys-313–Cys-374.

The protein belongs to the TGF-beta family. As to quaternary structure, homodimer; disulfide-linked. Interacts with WFIKKN2, leading to inhibit its activity. Interacts with FSTL3. Post-translationally, synthesized as large precursor molecule that undergoes proteolytic cleavage to generate an N-terminal propeptide and a disulfide linked C-terminal dimer, which is the biologically active molecule. The circulating form consists of a latent complex of the C-terminal dimer and other proteins, including its propeptide, which maintain the C-terminal dimer in a latent, inactive state. Ligand activation requires additional cleavage of the prodomain by a tolloid-like metalloproteinase.

The protein resides in the secreted. In terms of biological role, acts specifically as a negative regulator of skeletal muscle growth. In Lepus capensis (Brown hare), this protein is Growth/differentiation factor 8 (MSTN).